A 363-amino-acid chain; its full sequence is UDP-N-acetylglucosamine--N-acetylmuramyl-(pentapeptide) pyrophosphoryl-undecaprenol N-acetylglucosamine transferase (363 aa).

Residues 14–16 (TGG), N122, R163, S190, and Q285 each bind UDP-N-acetyl-alpha-D-glucosamine.

This sequence belongs to the glycosyltransferase 28 family. MurG subfamily.

It is found in the cell inner membrane. It carries out the reaction di-trans,octa-cis-undecaprenyl diphospho-N-acetyl-alpha-D-muramoyl-L-alanyl-D-glutamyl-meso-2,6-diaminopimeloyl-D-alanyl-D-alanine + UDP-N-acetyl-alpha-D-glucosamine = di-trans,octa-cis-undecaprenyl diphospho-[N-acetyl-alpha-D-glucosaminyl-(1-&gt;4)]-N-acetyl-alpha-D-muramoyl-L-alanyl-D-glutamyl-meso-2,6-diaminopimeloyl-D-alanyl-D-alanine + UDP + H(+). It participates in cell wall biogenesis; peptidoglycan biosynthesis. Functionally, cell wall formation. Catalyzes the transfer of a GlcNAc subunit on undecaprenyl-pyrophosphoryl-MurNAc-pentapeptide (lipid intermediate I) to form undecaprenyl-pyrophosphoryl-MurNAc-(pentapeptide)GlcNAc (lipid intermediate II). This Prochlorococcus marinus (strain MIT 9301) protein is UDP-N-acetylglucosamine--N-acetylmuramyl-(pentapeptide) pyrophosphoryl-undecaprenol N-acetylglucosamine transferase.